The primary structure comprises 208 residues: Redox-sensing transcriptional repressor Rex 1 (208 aa).

Positions 15–54 form a DNA-binding region, H-T-H motif; sequence SYYMCLERLLDEGVEVVSSEELARRLDLKASQIRKDLSYF. An NAD(+)-binding site is contributed by 89-94; sequence GAGNIG.

This sequence belongs to the transcriptional regulatory Rex family. As to quaternary structure, homodimer.

The protein resides in the cytoplasm. In terms of biological role, modulates transcription in response to changes in cellular NADH/NAD(+) redox state. The sequence is that of Redox-sensing transcriptional repressor Rex 1 from Thermotoga maritima (strain ATCC 43589 / DSM 3109 / JCM 10099 / NBRC 100826 / MSB8).